Reading from the N-terminus, the 104-residue chain is MDIHDYVELIALAFWVISVVSVGILSHVHFKNKRLEQFRITADDLMKNYVGLYNKESLASDQKINRIVNAVVDGLEAKGFKVEDQDVKDIFAKVAKIINENSSK.

The N-terminal stretch at 1 to 23 is a signal peptide; that stretch reads MDIHDYVELIALAFWVISVVSVG.

This is an uncharacterized protein from Lactobacillus helveticus (Lactobacillus suntoryeus).